The primary structure comprises 693 residues: Elongation factor G (693 aa).

Positions 8–282 constitute a tr-type G domain; that stretch reads EKTRNIGIMA…AVIDYLPSPL (275 aa). Residues 17–24, 81–85, and 135–138 each bind GTP; these read AHVDAGKT, DTPGH, and NKMD.

Belongs to the TRAFAC class translation factor GTPase superfamily. Classic translation factor GTPase family. EF-G/EF-2 subfamily.

The protein resides in the cytoplasm. In terms of biological role, catalyzes the GTP-dependent ribosomal translocation step during translation elongation. During this step, the ribosome changes from the pre-translocational (PRE) to the post-translocational (POST) state as the newly formed A-site-bound peptidyl-tRNA and P-site-bound deacylated tRNA move to the P and E sites, respectively. Catalyzes the coordinated movement of the two tRNA molecules, the mRNA and conformational changes in the ribosome. This Streptococcus gordonii (strain Challis / ATCC 35105 / BCRC 15272 / CH1 / DL1 / V288) protein is Elongation factor G.